The primary structure comprises 157 residues: Transcription antitermination protein NusB (157 aa).

It belongs to the NusB family.

Functionally, involved in transcription antitermination. Required for transcription of ribosomal RNA (rRNA) genes. Binds specifically to the boxA antiterminator sequence of the ribosomal RNA (rrn) operons. The protein is Transcription antitermination protein NusB of Helicobacter hepaticus (strain ATCC 51449 / 3B1).